The chain runs to 134 residues: Protein NrdI (134 aa).

It belongs to the NrdI family.

Functionally, probably involved in ribonucleotide reductase function. This is Protein NrdI from Chromohalobacter salexigens (strain ATCC BAA-138 / DSM 3043 / CIP 106854 / NCIMB 13768 / 1H11).